The sequence spans 367 residues: Probable glutamine synthetase (367 aa).

The GS beta-grasp domain maps to 30–110 (IQATYVWIDG…VMCDTLDHQM (81 aa)). Residues 117-367 (HRQACAEIMH…TAMIAQSILF (251 aa)) enclose the GS catalytic domain.

It belongs to the glutamine synthetase family. Homooctamer.

Its subcellular location is the cytoplasm. The enzyme catalyses L-glutamate + NH4(+) + ATP = L-glutamine + ADP + phosphate + H(+). This is Probable glutamine synthetase (gln-2) from Caenorhabditis elegans.